The chain runs to 116 residues: MRHKHGYRKLGRTSSHRKALLKNLAIALIEHNKIETGIYKAKELRSYIEKLTTVARVGDFNAHRHVFAYLQNKEATHKLVTEIAPKYAQRNGGYTRIQRTTFRRGDASTLATIEFV.

The protein belongs to the bacterial ribosomal protein bL17 family. Part of the 50S ribosomal subunit. Contacts protein L32.

The polypeptide is Large ribosomal subunit protein bL17 (Helicobacter pylori (strain J99 / ATCC 700824) (Campylobacter pylori J99)).